The chain runs to 257 residues: uncharacterized protein (257 aa).

Helical transmembrane passes span 5–25 (FLYF…IVTF), 29–49 (LALV…GTLI), 53–73 (TLSF…GDWI), 146–166 (LGCI…GIAI), 180–200 (IQFL…WKLW), and 216–236 (VNLC…MIYI).

Belongs to the DedA family.

It is found in the cell membrane. This is an uncharacterized protein from Buchnera aphidicola subsp. Baizongia pistaciae (strain Bp).